The following is a 235-amino-acid chain: Aspartate/glutamate leucyltransferase (235 aa).

This sequence belongs to the R-transferase family. Bpt subfamily.

It localises to the cytoplasm. The enzyme catalyses N-terminal L-glutamyl-[protein] + L-leucyl-tRNA(Leu) = N-terminal L-leucyl-L-glutamyl-[protein] + tRNA(Leu) + H(+). It catalyses the reaction N-terminal L-aspartyl-[protein] + L-leucyl-tRNA(Leu) = N-terminal L-leucyl-L-aspartyl-[protein] + tRNA(Leu) + H(+). Functionally, functions in the N-end rule pathway of protein degradation where it conjugates Leu from its aminoacyl-tRNA to the N-termini of proteins containing an N-terminal aspartate or glutamate. The protein is Aspartate/glutamate leucyltransferase of Stutzerimonas stutzeri (strain A1501) (Pseudomonas stutzeri).